The primary structure comprises 415 residues: Phosphoribosylamine--glycine ligase (415 aa).

Residues 108–311 (KKIMKKYNIP…LMQHIIDLDE (204 aa)) form the ATP-grasp domain. An ATP-binding site is contributed by 134–191 (IENCELPVVVKKDGLAAGKGVIIADTIEAARSAIEIMYGDEEEGTVVFETFLEGEEFS). Mg(2+)-binding residues include glutamate 281 and asparagine 283.

It belongs to the GARS family. Mg(2+) is required as a cofactor. Requires Mn(2+) as cofactor.

The catalysed reaction is 5-phospho-beta-D-ribosylamine + glycine + ATP = N(1)-(5-phospho-beta-D-ribosyl)glycinamide + ADP + phosphate + H(+). It participates in purine metabolism; IMP biosynthesis via de novo pathway; N(1)-(5-phospho-D-ribosyl)glycinamide from 5-phospho-alpha-D-ribose 1-diphosphate: step 2/2. This Staphylococcus aureus (strain Mu50 / ATCC 700699) protein is Phosphoribosylamine--glycine ligase.